Here is a 213-residue protein sequence, read N- to C-terminus: Uridine kinase (213 aa).

Position 15–22 (15–22 (GASASGKS)) interacts with ATP.

Belongs to the uridine kinase family.

It is found in the cytoplasm. It carries out the reaction uridine + ATP = UMP + ADP + H(+). The enzyme catalyses cytidine + ATP = CMP + ADP + H(+). Its pathway is pyrimidine metabolism; CTP biosynthesis via salvage pathway; CTP from cytidine: step 1/3. It participates in pyrimidine metabolism; UMP biosynthesis via salvage pathway; UMP from uridine: step 1/1. The chain is Uridine kinase from Serratia proteamaculans (strain 568).